Here is a 288-residue protein sequence, read N- to C-terminus: Phosphate import ATP-binding protein PstB (288 aa).

The region spanning 42–283 (IRDLNFYYEN…PKEKKTRDYI (242 aa)) is the ABC transporter domain. Position 74 to 81 (74 to 81 (GPSGCGKS)) interacts with ATP.

The protein belongs to the ABC transporter superfamily. Phosphate importer (TC 3.A.1.7) family. As to quaternary structure, the complex is composed of two ATP-binding proteins (PstB), two transmembrane proteins (PstC and PstA) and a solute-binding protein (PstS).

The protein localises to the cell membrane. The enzyme catalyses phosphate(out) + ATP + H2O = ADP + 2 phosphate(in) + H(+). Part of the ABC transporter complex PstSACB involved in phosphate import. Responsible for energy coupling to the transport system. The sequence is that of Phosphate import ATP-binding protein PstB from Malacoplasma penetrans (strain HF-2) (Mycoplasma penetrans).